The chain runs to 264 residues: ATP synthase subunit a (264 aa).

Helical transmembrane passes span 29 to 49 (TWHI…LWIF), 87 to 107 (NALI…MNFM), 134 to 154 (DVNI…YYSI), 177 to 197 (IPVN…SLAL), 208 to 228 (LIFI…SLGV), and 235 to 255 (LIFH…LTIV).

Belongs to the ATPase A chain family. F-type ATPases have 2 components, CF(1) - the catalytic core - and CF(0) - the membrane proton channel. CF(1) has five subunits: alpha(3), beta(3), gamma(1), delta(1), epsilon(1). CF(0) has three main subunits: a(1), b(2) and c(9-12). The alpha and beta chains form an alternating ring which encloses part of the gamma chain. CF(1) is attached to CF(0) by a central stalk formed by the gamma and epsilon chains, while a peripheral stalk is formed by the delta and b chains.

Its subcellular location is the cell inner membrane. In terms of biological role, key component of the proton channel; it plays a direct role in the translocation of protons across the membrane. This Shewanella sp. (strain MR-4) protein is ATP synthase subunit a.